A 1252-amino-acid chain; its full sequence is Putative late blight resistance protein homolog R1B-11 (1252 aa).

A coiled-coil region spans residues 543 to 566 (RYSDSLAFLKNQLQVIQTEFESLQ). 2 NB-ARC domains span residues 684–736 (SVRR…RSRI) and 786–830 (SYHV…SSEG). LRR repeat units follow at residues 955-980 (FKFL…PYLR), 998-1026 (LWNL…VWDM), 1077-1100 (LKHL…KVSS), 1103-1125 (FPKL…ADDA), 1126-1149 (FPNL…CFTD), 1187-1212 (LVII…RLSS), and 1213-1236 (LPGI…DVDA). Residues 1188-1252 (VIIKKLVLKF…VGKLNKRDML (65 aa)) form the HMA domain.

It belongs to the disease resistance NB-LRR family.

It is found in the cytoplasm. Its subcellular location is the membrane. In terms of biological role, confers resistance to late blight (Phytophthora infestans) races carrying the avirulence gene Avr1. Resistance proteins guard the plant against pathogens that contain an appropriate avirulence protein via an indirect interaction with this avirulence protein. That triggers a defense system including the hypersensitive response, which restricts the pathogen growth. The sequence is that of Putative late blight resistance protein homolog R1B-11 (R1B-11) from Solanum demissum (Wild potato).